Consider the following 129-residue polypeptide: Lysozyme C (129 aa).

One can recognise a C-type lysozyme domain in the interval Lys-1 to Leu-129. Disulfide bonds link Cys-6–Cys-127, Cys-30–Cys-115, Cys-64–Cys-80, and Cys-76–Cys-94. Catalysis depends on residues Glu-35 and Asp-52.

It belongs to the glycosyl hydrolase 22 family. As to quaternary structure, monomer.

The protein resides in the secreted. The catalysed reaction is Hydrolysis of (1-&gt;4)-beta-linkages between N-acetylmuramic acid and N-acetyl-D-glucosamine residues in a peptidoglycan and between N-acetyl-D-glucosamine residues in chitodextrins.. Functionally, lysozymes have primarily a bacteriolytic function; those in tissues and body fluids are associated with the monocyte-macrophage system and enhance the activity of immunoagents. The protein is Lysozyme C (LYZ) of Callipepla californica (California quail).